A 109-amino-acid chain; its full sequence is Ubiquitin-related modifier 1 homolog (109 aa).

Gly-109 carries the post-translational modification 1-thioglycine. Residue Gly-109 forms a Glycyl lysine isopeptide (Gly-Lys) (interchain with K-? in acceptor proteins) linkage.

It belongs to the URM1 family. Post-translationally, C-terminal thiocarboxylation occurs in 2 steps, it is first acyl-adenylated (-COAMP) via the hesA/moeB/thiF part of the MOCS3 homolog, then thiocarboxylated (-COSH) via the rhodanese domain of the MOCS3 homolog.

The protein resides in the cytoplasm. It functions in the pathway tRNA modification; 5-methoxycarbonylmethyl-2-thiouridine-tRNA biosynthesis. In terms of biological role, acts as a sulfur carrier required for 2-thiolation of mcm(5)S(2)U at tRNA wobble positions of cytosolic tRNA(Lys), tRNA(Glu) and tRNA(Gln). Serves as sulfur donor in tRNA 2-thiolation reaction by being thiocarboxylated (-COSH) at its C-terminus by MOCS3. The sulfur is then transferred to tRNA to form 2-thiolation of mcm(5)S(2)U. Also acts as a ubiquitin-like protein (UBL) that is covalently conjugated via an isopeptide bond to lysine residues of target proteins. The thiocarboxylated form serves as substrate for conjugation and oxidative stress specifically induces the formation of UBL-protein conjugates. The protein is Ubiquitin-related modifier 1 homolog of Anopheles gambiae (African malaria mosquito).